The primary structure comprises 409 residues: Translation initiation factor 2 subunit gamma (409 aa).

The tr-type G domain maps to 7–203 (QPEVNIGLVG…AIEREIPTPE (197 aa)). The interval 16–23 (GHVDHGKT) is G1. Mg(2+) is bound by residues D19, T23, G44, and S46. 19–24 (DHGKTT) is a GTP binding site. The interval 44-48 (GISIR) is G2. A G3 region spans residues 90–93 (DAPG). GTP contacts are provided by residues 146 to 149 (NKID) and 181 to 183 (SAQ). Residues 146–149 (NKID) form a G4 region. Positions 181–183 (SAQ) are G5.

Belongs to the TRAFAC class translation factor GTPase superfamily. Classic translation factor GTPase family. EIF2G subfamily. Heterotrimer composed of an alpha, a beta and a gamma chain. Mg(2+) serves as cofactor.

It carries out the reaction GTP + H2O = GDP + phosphate + H(+). EIF-2 functions in the early steps of protein synthesis by forming a ternary complex with GTP and initiator tRNA. This is Translation initiation factor 2 subunit gamma from Haloquadratum walsbyi (strain DSM 16790 / HBSQ001).